A 468-amino-acid polypeptide reads, in one-letter code: N-acyl-phosphatidylethanolamine-hydrolyzing phospholipase D, mitochondrial (468 aa).

The transit peptide at 1-39 directs the protein to the mitochondrion; it reads MNFVTCHVQMRLLLQRRLVRLRESELFRPQTSLSTFKRH. A helical transmembrane segment spans residues 54 to 76; sequence YARILLLSVLVPYTGYAFYVSLA. Residues histidine 265, histidine 267, aspartate 269, histidine 270, histidine 332, and histidine 425 each contribute to the Zn(2+) site.

Belongs to the NAPE-PLD family. Requires Zn(2+) as cofactor.

Its subcellular location is the mitochondrion membrane. The enzyme catalyses an N-acyl-1,2-diacyl-sn-glycero-3-phosphoethanolamine + H2O = an N-acylethanolamine + a 1,2-diacyl-sn-glycero-3-phosphate + H(+). Functionally, hydrolyzes N-acyl-phosphatidylethanolamines (NAPEs) to produce N-acylethanolamines (NAEs). This chain is N-acyl-phosphatidylethanolamine-hydrolyzing phospholipase D, mitochondrial (FMP30), found in Saccharomyces cerevisiae (strain ATCC 204508 / S288c) (Baker's yeast).